Here is a 373-residue protein sequence, read N- to C-terminus: 5-amino-6-(5-phospho-D-ribitylamino)uracil phosphatase, chloroplastic (373 aa).

This sequence belongs to the HAD-like hydrolase superfamily. DOG/GPP family. Homodimer. It depends on Mg(2+) as a cofactor.

The protein localises to the plastid. It localises to the chloroplast. The enzyme catalyses 5-amino-6-(5-phospho-D-ribitylamino)uracil + H2O = 5-amino-6-(D-ribitylamino)uracil + phosphate. Functionally, catalyzes the dephosphorylation of 5-amino-6-(5-phospho-D-ribitylamino)uracil, also known as ARPP, but has no activity toward flavin mononucleotide (FMN). The protein is 5-amino-6-(5-phospho-D-ribitylamino)uracil phosphatase, chloroplastic of Arabidopsis thaliana (Mouse-ear cress).